Here is a 285-residue protein sequence, read N- to C-terminus: Complex I assembly factor TIMMDC1, mitochondrial (285 aa).

A run of 4 helical transmembrane segments spans residues 80–100 (AALS…FIYA), 137–159 (RWSW…LTVY), 165–185 (LSHF…NLGL), and 188–208 (LVAG…LLMA).

Belongs to the Tim17/Tim22/Tim23 family. As to quaternary structure, associates with the intermediate 315 kDa subcomplex of incompletely assembled complex I. Interacts with TMEM70.

Its subcellular location is the mitochondrion membrane. Chaperone protein involved in the assembly of the mitochondrial NADH:ubiquinone oxidoreductase complex (complex I). Participates in constructing the membrane arm of complex I. This is Complex I assembly factor TIMMDC1, mitochondrial from Rattus norvegicus (Rat).